The chain runs to 91 residues: MAKEELLEFEGTVTEVLPDGNFRVRLDNDHQILAYAAGKMKKNRIRTIEGDRVVVEMSPYDLDRGRINFRHKAEGNAPPPGARRQQNFRRR.

Residues Met1–Lys72 form the S1-like domain. The tract at residues Arg70 to Arg91 is disordered.

Belongs to the IF-1 family. Component of the 30S ribosomal translation pre-initiation complex which assembles on the 30S ribosome in the order IF-2 and IF-3, IF-1 and N-formylmethionyl-tRNA(fMet); mRNA recruitment can occur at any time during PIC assembly.

It localises to the cytoplasm. Functionally, one of the essential components for the initiation of protein synthesis. Stabilizes the binding of IF-2 and IF-3 on the 30S subunit to which N-formylmethionyl-tRNA(fMet) subsequently binds. Helps modulate mRNA selection, yielding the 30S pre-initiation complex (PIC). Upon addition of the 50S ribosomal subunit IF-1, IF-2 and IF-3 are released leaving the mature 70S translation initiation complex. The protein is Translation initiation factor IF-1 of Azorhizobium caulinodans (strain ATCC 43989 / DSM 5975 / JCM 20966 / LMG 6465 / NBRC 14845 / NCIMB 13405 / ORS 571).